A 337-amino-acid chain; its full sequence is Ketol-acid reductoisomerase (NADP(+)) (337 aa).

Positions 3-183 (VEVFYDDDAD…GGTRAGAIRT (181 aa)) constitute a KARI N-terminal Rossmann domain. Residues 26-29 (YGSQ), serine 52, serine 54, and 84-87 (DTAQ) each bind NADP(+). Histidine 109 is a catalytic residue. Residue glycine 135 coordinates NADP(+). Positions 184–329 (TFTEETETDL…SKLRGMMSWV (146 aa)) constitute a KARI C-terminal knotted domain. Mg(2+) is bound by residues aspartate 192, glutamate 196, glutamate 228, and glutamate 232. Serine 253 contributes to the substrate binding site.

Belongs to the ketol-acid reductoisomerase family. It depends on Mg(2+) as a cofactor.

The catalysed reaction is (2R)-2,3-dihydroxy-3-methylbutanoate + NADP(+) = (2S)-2-acetolactate + NADPH + H(+). The enzyme catalyses (2R,3R)-2,3-dihydroxy-3-methylpentanoate + NADP(+) = (S)-2-ethyl-2-hydroxy-3-oxobutanoate + NADPH + H(+). The protein operates within amino-acid biosynthesis; L-isoleucine biosynthesis; L-isoleucine from 2-oxobutanoate: step 2/4. Its pathway is amino-acid biosynthesis; L-valine biosynthesis; L-valine from pyruvate: step 2/4. Involved in the biosynthesis of branched-chain amino acids (BCAA). Catalyzes an alkyl-migration followed by a ketol-acid reduction of (S)-2-acetolactate (S2AL) to yield (R)-2,3-dihydroxy-isovalerate. In the isomerase reaction, S2AL is rearranged via a Mg-dependent methyl migration to produce 3-hydroxy-3-methyl-2-ketobutyrate (HMKB). In the reductase reaction, this 2-ketoacid undergoes a metal-dependent reduction by NADPH to yield (R)-2,3-dihydroxy-isovalerate. The polypeptide is Ketol-acid reductoisomerase (NADP(+)) (Salinispora arenicola (strain CNS-205)).